The sequence spans 336 residues: Dihydroorotate dehydrogenase (quinone) (336 aa).

FMN contacts are provided by residues 62–66 (AGMDK) and Thr-86. Lys-66 lines the substrate pocket. Residue 111–115 (NRMGF) coordinates substrate. Positions 139 and 172 each coordinate FMN. A substrate-binding site is contributed by Asn-172. Catalysis depends on Ser-175, which acts as the Nucleophile. Asn-177 lines the substrate pocket. FMN is bound by residues Lys-217 and Thr-245. Residue 246–247 (NT) participates in substrate binding. FMN-binding positions include Gly-268, Gly-297, and 318–319 (YS).

The protein belongs to the dihydroorotate dehydrogenase family. Type 2 subfamily. Monomer. It depends on FMN as a cofactor.

It localises to the cell membrane. It carries out the reaction (S)-dihydroorotate + a quinone = orotate + a quinol. Its pathway is pyrimidine metabolism; UMP biosynthesis via de novo pathway; orotate from (S)-dihydroorotate (quinone route): step 1/1. Catalyzes the conversion of dihydroorotate to orotate with quinone as electron acceptor. In Buchnera aphidicola subsp. Schizaphis graminum (strain Sg), this protein is Dihydroorotate dehydrogenase (quinone).